The sequence spans 206 residues: Transmembrane emp24 domain-containing protein bai (206 aa).

Positions 1–20 are cleaved as a signal peptide; sequence MARTLLILCTLMAWAWTGEA. The Lumenal segment spans residues 21–172; it reads VMFKLTPNTQ…RDTNEKTNSR (152 aa). Residues 30 to 140 form the GOLD domain; it reads QKCLKEDIQA…LKPLEVDLKR (111 aa). A helical transmembrane segment spans residues 173-193; it reads VLFFSIFSMCCLLGLATWQVL. The Cytoplasmic portion of the chain corresponds to 194–206; the sequence is YLRRYFKAKKLIE.

Belongs to the EMP24/GP25L family.

The protein resides in the membrane. Eca and bai are essential, though not redundant, for dorsoventral patterning of the embryo. Specifically required during early embryogenesis for the activity of maternal tkv, while the zygotic tkv is not affected. The protein is Transmembrane emp24 domain-containing protein bai of Drosophila ananassae (Fruit fly).